We begin with the raw amino-acid sequence, 192 residues long: Peptidyl-tRNA hydrolase (192 aa).

Residue Tyr-17 coordinates tRNA. His-22 acts as the Proton acceptor in catalysis. TRNA is bound by residues Tyr-68, Asn-70, and Asn-116.

Belongs to the PTH family. In terms of assembly, monomer.

The protein resides in the cytoplasm. It carries out the reaction an N-acyl-L-alpha-aminoacyl-tRNA + H2O = an N-acyl-L-amino acid + a tRNA + H(+). Functionally, hydrolyzes ribosome-free peptidyl-tRNAs (with 1 or more amino acids incorporated), which drop off the ribosome during protein synthesis, or as a result of ribosome stalling. Catalyzes the release of premature peptidyl moieties from peptidyl-tRNA molecules trapped in stalled 50S ribosomal subunits, and thus maintains levels of free tRNAs and 50S ribosomes. This is Peptidyl-tRNA hydrolase from Mycolicibacterium gilvum (strain PYR-GCK) (Mycobacterium gilvum (strain PYR-GCK)).